A 247-amino-acid chain; its full sequence is L-cystine import ATP-binding protein TcyC (247 aa).

The ABC transporter domain occupies 2 to 240 (LTVKGLNKSF…PKEERTQRFL (239 aa)). 34-41 (GPSGSGKT) contacts ATP.

Belongs to the ABC transporter superfamily. L-cystine importer (TC 3.A.1.3.14) family. The complex is composed of two ATP-binding proteins (TcyC), two transmembrane proteins (TcyB) and a solute-binding protein (TcyA).

The protein resides in the cell membrane. Functionally, part of the ABC transporter complex TcyABC involved in L-cystine import. Responsible for energy coupling to the transport system. The sequence is that of L-cystine import ATP-binding protein TcyC (tcyC) from Bacillus subtilis (strain 168).